A 1238-amino-acid polypeptide reads, in one-letter code: Virulence sensor protein BvgS (1238 aa).

The signal sequence occupies residues 1-30 (MPAPHRLYPRSLICLAQALLAWALLAWAPA). The Cytoplasmic portion of the chain corresponds to 33 to 307 (SQELTLVGKA…REQQWMANHP (275 aa)). A helical transmembrane segment spans residues 308–331 (VVKVAVLNLFAPFTLFRTDEQFGG). Residues 332–541 (ISAAVLQLLQ…PRTWYAYRNE (210 aa)) are Periplasmic-facing. Residues 542–563 (IYLLIGLGLLSALLFLSWIVYL) traverse the membrane as a helical segment. Residues 564-1238 (RRQIRQRKRA…LEQRPHQGQP (675 aa)) lie on the Cytoplasmic side of the membrane. The PAS domain maps to 580 to 651 (QLEFMRVLID…MHEFLLTRMS (72 aa)). A PAC domain is found at 652–708 (AEREPRFEDRDVTLHGRTRHVYQWTVPYGDSLGELKGIIGGWIDITERAELLRELHD). Residues 726–948 (TMSHEIRTPM…TVSVDLRLTM (223 aa)) enclose the Histidine kinase domain. Histidine 729 bears the Phosphohistidine; by autocatalysis mark. Residues 974–1095 (RVLVVDDHKP…ALRQRLNEAA (122 aa)) form the Response regulatory domain. Aspartate 1023 carries the post-translational modification 4-aspartylphosphate. An HPt domain is found at 1133-1228 (DEALIRQLLE…AALETQLRAW (96 aa)). The residue at position 1172 (histidine 1172) is a Phosphohistidine.

Activation requires a sequential transfer of a phosphate group from a His in the primary transmitter domain, to an Asp in the receiver domain and to a His in the secondary transmitter domain.

The protein resides in the cell inner membrane. The enzyme catalyses ATP + protein L-histidine = ADP + protein N-phospho-L-histidine.. Member of the two-component regulatory system BvgS/BvgA. Phosphorylates BvgA via a four-step phosphorelay in response to environmental signals. This is Virulence sensor protein BvgS (bvgS) from Bordetella bronchiseptica (strain ATCC BAA-588 / NCTC 13252 / RB50) (Alcaligenes bronchisepticus).